Reading from the N-terminus, the 544-residue chain is Baeyer-Villiger monooxygenase (544 aa).

Residues Phe-27, Glu-47, Trp-56, Asp-67, Tyr-73, and Val-119 each contribute to the FAD site.

The protein belongs to the FAD-binding monooxygenase family. FAD serves as cofactor.

Functionally, catalyzes a Baeyer-Villiger oxidation reaction, i.e. the insertion of an oxygen atom into a carbon-carbon bond adjacent to a carbonyl, which converts ketones to esters or lactones using NADPH as an electron donor. Besides cycloalkanones, can use cyclic alpha,beta-unsaturated ketones as substrates, leading to enol-lactones. Can also act on methylated cycloalkanones and methylated cycloalkenones with high enantioselectivity in some cases. The chain is Baeyer-Villiger monooxygenase from Parvibaculum lavamentivorans (strain DS-1 / DSM 13023 / NCIMB 13966).